The sequence spans 948 residues: Sensor histidine kinase RcsC (948 aa).

Topologically, residues 1 to 20 (MKYLASFRTTLKVSRYLFRA) are cytoplasmic. A helical membrane pass occupies residues 21-41 (LALLIWLLIAFVSVFYIVNAL). Residues 42–313 (HQRESEIRQE…PVDLVLERIR (272 aa)) are Periplasmic-facing. Residues 314 to 334 (ILILNAILLNVLVGAGLFTLA) traverse the membrane as a helical segment. The Cytoplasmic portion of the chain corresponds to 335–948 (RMYERRIFIP…YAERVRKTRA (614 aa)). The 69-residue stretch at 357–425 (QFNRKIVASA…VLTSNNTNLQ (69 aa)) folds into the PAS domain. The 217-residue stretch at 476–692 (TVSHELRTPL…QFTLRIPLYG (217 aa)) folds into the Histidine kinase domain. Histidine 479 carries the phosphohistidine; by autocatalysis modification. The ABL domain occupies 705-805 (AGTCCWLAVR…ARIYSIELDS (101 aa)). Positions 826–940 (MILVVDDHPI…ALKQTLAVYA (115 aa)) constitute a Response regulatory domain. 4-aspartylphosphate is present on aspartate 875.

The protein belongs to the RcsC family. Interacts with RcsD. Post-translationally, autophosphorylated. Activation probably requires a transfer of a phosphate group from a His in the transmitter domain to an Asp in the receiver domain.

Its subcellular location is the cell inner membrane. The enzyme catalyses ATP + protein L-histidine = ADP + protein N-phospho-L-histidine.. In terms of biological role, component of the Rcs signaling system, which controls transcription of numerous genes. RcsC functions as a membrane-associated protein kinase that phosphorylates RcsD in response to environmental signals. The phosphoryl group is then transferred to the response regulator RcsB. The chain is Sensor histidine kinase RcsC from Salmonella typhi.